A 592-amino-acid polypeptide reads, in one-letter code: BRCA1-associated protein (592 aa).

A Phosphoserine modification is found at Ser-52. The segment at 78 to 124 (KSNPDELKTTVEERKSSEASPTAQRSKDHSKECINAAPDSPSKQLPD) is disordered. The segment covering 80 to 94 (NPDELKTTVEERKSS) has biased composition (basic and acidic residues). A phosphoserine mark is found at Ser-97, Ser-117, and Ser-119. The RING-type zinc finger occupies 264-304 (CTVCLERMDESVNGILTTLCNHSFHSQCLQRWDDTTCPVCR). Residues 301–393 (PVCRYCQTPE…GKIVQYECEG (93 aa)) form a UBP-type; degenerate zinc finger. Zn(2+) is bound by residues Cys-317, Cys-320, Cys-329, Cys-332, Cys-337, His-344, His-348, and His-354. The stretch at 429–537 (RIEKDTAEEI…EIQEQLRDVM (109 aa)) forms a coiled coil. The disordered stretch occupies residues 565 to 592 (AMASASSPASSGGSGKLPSRKGRSKRGK). Basic residues predominate over residues 582 to 592 (PSRKGRSKRGK).

Interacts with the nuclear localization signal of BRCA1 and with the N-terminal of KSR1. The C-terminal portion of BCRA1 interacts with DDB1. As to expression, expressed in breast epithelial cell lines.

Its subcellular location is the cytoplasm. The enzyme catalyses S-ubiquitinyl-[E2 ubiquitin-conjugating enzyme]-L-cysteine + [acceptor protein]-L-lysine = [E2 ubiquitin-conjugating enzyme]-L-cysteine + N(6)-ubiquitinyl-[acceptor protein]-L-lysine.. It participates in protein modification; protein ubiquitination. Functionally, negatively regulates MAP kinase activation by limiting the formation of Raf/MEK complexes probably by inactivation of the KSR1 scaffold protein. Also acts as a Ras responsive E3 ubiquitin ligase that, on activation of Ras, is modified by auto-polyubiquitination resulting in the release of inhibition of Raf/MEK complex formation. May also act as a cytoplasmic retention protein with a role in regulating nuclear transport. The polypeptide is BRCA1-associated protein (Homo sapiens (Human)).